The primary structure comprises 454 residues: Bifunctional protein GlmU (454 aa).

The segment at 1–225 (MNIVILAAGM…LWETLGVNSK (225 aa)) is pyrophosphorylase. UDP-N-acetyl-alpha-D-glucosamine contacts are provided by residues 6–9 (LAAG), Lys-20, Gln-71, 76–77 (GT), 98–100 (YGD), Gly-135, Glu-150, Asn-165, and Asn-223. Asp-100 is a Mg(2+) binding site. Asn-223 contacts Mg(2+). A linker region spans residues 226 to 246 (VQLAEIERIHQRNIAQRLLEA). The tract at residues 247-454 (GVTLLDPARI…WQRPVKQPKK (208 aa)) is N-acetyltransferase. Positions 329 and 347 each coordinate UDP-N-acetyl-alpha-D-glucosamine. His-359 serves as the catalytic Proton acceptor. Positions 362 and 373 each coordinate UDP-N-acetyl-alpha-D-glucosamine. Acetyl-CoA is bound by residues Ala-376, 382-383 (NY), Ser-401, Ala-419, and Arg-436.

In the N-terminal section; belongs to the N-acetylglucosamine-1-phosphate uridyltransferase family. It in the C-terminal section; belongs to the transferase hexapeptide repeat family. As to quaternary structure, homotrimer. It depends on Mg(2+) as a cofactor.

It localises to the cytoplasm. It catalyses the reaction alpha-D-glucosamine 1-phosphate + acetyl-CoA = N-acetyl-alpha-D-glucosamine 1-phosphate + CoA + H(+). It carries out the reaction N-acetyl-alpha-D-glucosamine 1-phosphate + UTP + H(+) = UDP-N-acetyl-alpha-D-glucosamine + diphosphate. It functions in the pathway nucleotide-sugar biosynthesis; UDP-N-acetyl-alpha-D-glucosamine biosynthesis; N-acetyl-alpha-D-glucosamine 1-phosphate from alpha-D-glucosamine 6-phosphate (route II): step 2/2. It participates in nucleotide-sugar biosynthesis; UDP-N-acetyl-alpha-D-glucosamine biosynthesis; UDP-N-acetyl-alpha-D-glucosamine from N-acetyl-alpha-D-glucosamine 1-phosphate: step 1/1. Its pathway is bacterial outer membrane biogenesis; LPS lipid A biosynthesis. Its function is as follows. Catalyzes the last two sequential reactions in the de novo biosynthetic pathway for UDP-N-acetylglucosamine (UDP-GlcNAc). The C-terminal domain catalyzes the transfer of acetyl group from acetyl coenzyme A to glucosamine-1-phosphate (GlcN-1-P) to produce N-acetylglucosamine-1-phosphate (GlcNAc-1-P), which is converted into UDP-GlcNAc by the transfer of uridine 5-monophosphate (from uridine 5-triphosphate), a reaction catalyzed by the N-terminal domain. The sequence is that of Bifunctional protein GlmU from Cupriavidus metallidurans (strain ATCC 43123 / DSM 2839 / NBRC 102507 / CH34) (Ralstonia metallidurans).